We begin with the raw amino-acid sequence, 274 residues long: Glutamate racemase (274 aa).

Substrate is bound by residues 9–10 (DS) and 41–42 (YG). Residue cysteine 73 is the Proton donor/acceptor of the active site. Substrate is bound at residue 74 to 75 (NT). Cysteine 183 (proton donor/acceptor) is an active-site residue. Substrate is bound at residue 184 to 185 (TH).

Belongs to the aspartate/glutamate racemases family.

It catalyses the reaction L-glutamate = D-glutamate. The protein operates within cell wall biogenesis; peptidoglycan biosynthesis. In terms of biological role, provides the (R)-glutamate required for cell wall biosynthesis. This chain is Glutamate racemase, found in Shewanella baltica (strain OS155 / ATCC BAA-1091).